We begin with the raw amino-acid sequence, 98 residues long: C-X-C motif chemokine 10 (98 aa).

The N-terminal stretch at 1-21 (MNPSAAVVLCLVLLSLSGTQG) is a signal peptide. Residue R26 is modified to Citrulline. Intrachain disulfides connect C30-C57 and C32-C74.

It belongs to the intercrine alpha (chemokine CxC) family. Monomer, dimer, and tetramer. Interacts with CXCR3 (via N-terminus). As to expression, in the central nervous system, CXCL10 is predominantly localized to activated neurons. Expressed in both microglia and astrocytes.

Its subcellular location is the secreted. Functionally, pro-inflammatory cytokine that is involved in a wide variety of processes such as chemotaxis, differentiation, and activation of peripheral immune cells, regulation of cell growth, apoptosis and modulation of angiostatic effects. Plays thereby an important role during viral infections by stimulating the activation and migration of immune cells to the infected sites. Mechanistically, binding of CXCL10 to the CXCR3 receptor activates G protein-mediated signaling and results in downstream activation of phospholipase C-dependent pathway, an increase in intracellular calcium production and actin reorganization. In turn, recruitment of activated Th1 lymphocytes occurs at sites of inflammation. Activation of the CXCL10/CXCR3 axis also plays an important role in neurons in response to brain injury for activating microglia, the resident macrophage population of the central nervous system, and directing them to the lesion site. This recruitment is an essential element for neuronal reorganization. This is C-X-C motif chemokine 10 (Cxcl10) from Rattus norvegicus (Rat).